Reading from the N-terminus, the 556-residue chain is Aplysianin-A (556 aa).

An N-terminal signal peptide occupies residues 1–19 (MAVRFLALGLLIFVTSCSG). 6 N-linked (GlcNAc...) asparagine glycosylation sites follow: Asn150, Asn177, Asn374, Asn399, Asn414, and Asn430.

The protein to A.fulica achacin protein. Homotetramer. As to expression, albumen gland.

Has antibacterial activity against Gram-negative and Gram-positive bacteria. The polypeptide is Aplysianin-A (Aplysia kurodai (Kuroda's sea hare)).